Consider the following 372-residue polypeptide: Integral membrane protein GPR137B (372 aa).

Residues 1 to 32 are Lumenal-facing; the sequence is MESPAWDATKNDSLPPTLTPAVPPYVKLGLTT. The N-linked (GlcNAc...) asparagine glycan is linked to Asn11. Residues 33–53 form a helical membrane-spanning segment; the sequence is VYTIFYLLLFAFVYVQLWLVL. Residues 54–64 are Cytoplasmic-facing; it reads HYKHKRFSYQT. Residues 65–85 form a helical membrane-spanning segment; sequence VFLFLCLLWASLRAVLFSFYF. Topologically, residues 86-93 are lumenal; sequence RNFVEANR. A helical membrane pass occupies residues 94–114; sequence LGAFTFWLLYCFPVCLQFFTL. The Cytoplasmic segment spans residues 115 to 144; that stretch reads TLMNLYFARVIYKAKSKYLPELIKYRLPLY. A helical membrane pass occupies residues 145-165; that stretch reads LAFLVISLLFLVVNLTCAILV. The Lumenal portion of the chain corresponds to 166–173; the sequence is KTDYAETK. A helical transmembrane segment spans residues 174–194; sequence VIVSIRVAINDTLFVLCAVSL. Residues 195–222 are Cytoplasmic-facing; that stretch reads SVCLYKISKMSLAGVYLESKGSSVCQVT. Residues 223-243 form a helical membrane-spanning segment; sequence CIGVTVILLYTSRACYNLVVL. The Lumenal segment spans residues 244 to 276; sequence SLSDSRYSSFDYDWYNVSDQADLKCKLGDAGYV. The N-linked (GlcNAc...) asparagine glycan is linked to Asn259. Residues 277 to 297 traverse the membrane as a helical segment; it reads VFGIILFIWELFPTSLVVYFF. Residues 298–372 lie on the Cytoplasmic side of the membrane; the sequence is RVRNSAQDMT…QTGSLQRDST (75 aa).

This sequence belongs to the GPR137 family.

Its subcellular location is the lysosome membrane. Functionally, lysosomal integral membrane protein that regulates the localization and activity of mTORC1, a signaling complex promoting cell growth in response to growth factors, energy levels, and amino acids. Interacts with Rag GTPases and increases the lysosomial localization and activity of Rag GTPases and thereby regulates mTORC1 translocation and activity in lysosome. Involved in the regulation of lysosomal morphology and autophagy. Also acts as a negative regulator of osteoclast activity. Also acts as a negative regulator of osteoclast activity. The chain is Integral membrane protein GPR137B (gpr137b) from Xenopus laevis (African clawed frog).